The following is a 500-amino-acid chain: Betaine aldehyde dehydrogenase, chloroplastic (500 aa).

A chloroplast-targeting transit peptide spans 1 to 7 (MSMPIPS). 238-243 (GSSATG) provides a ligand contact to NAD(+). Catalysis depends on Glu-260, which acts as the Proton acceptor. Residue Cys-294 is the Nucleophile of the active site.

It belongs to the aldehyde dehydrogenase family. As to quaternary structure, homodimer.

It is found in the plastid. The protein localises to the chloroplast. It catalyses the reaction betaine aldehyde + NAD(+) + H2O = glycine betaine + NADH + 2 H(+). It participates in amine and polyamine biosynthesis; betaine biosynthesis via choline pathway; betaine from betaine aldehyde: step 1/1. The sequence is that of Betaine aldehyde dehydrogenase, chloroplastic from Beta vulgaris (Sugar beet).